The following is a 153-amino-acid chain: Cell division protein SepF (153 aa).

It belongs to the SepF family. As to quaternary structure, homodimer. Interacts with FtsZ.

The protein localises to the cytoplasm. Functionally, cell division protein that is part of the divisome complex and is recruited early to the Z-ring. Probably stimulates Z-ring formation, perhaps through the cross-linking of FtsZ protofilaments. Its function overlaps with FtsA. This is Cell division protein SepF from Clostridium novyi (strain NT).